The following is a 420-amino-acid chain: DNA repair protein RadA (420 aa).

62–69 (GDPGIGKS) serves as a coordination point for ATP. A RadA KNRFG motif motif is present at residues 218–222 (KNRFG). Residues 317–420 (DAYLKSAGGV…IQEVLKKVFA (104 aa)) form a lon-protease-like region.

The protein belongs to the RecA family. RadA subfamily.

Plays a role in repairing double-strand DNA breaks, probably involving stabilizing or processing branched DNA or blocked replication forks. Required for efficient transformation with chromosomal (linear) DNA, but not for replicative plasmid DNA. Its increased sensitivity to a DNA damaging agent suggests it may be required for DNA repair. The sequence is that of DNA repair protein RadA from Streptococcus pneumoniae (strain ATCC BAA-255 / R6).